Consider the following 432-residue polypeptide: Glutamyl-tRNA reductase (432 aa).

Substrate contacts are provided by residues 50 to 53, serine 110, 115 to 117, and glutamine 121; these read TCNR and ETQ. Cysteine 51 functions as the Nucleophile in the catalytic mechanism. 190-195 serves as a coordination point for NADP(+); it reads GAGEMG.

Belongs to the glutamyl-tRNA reductase family. As to quaternary structure, homodimer.

The catalysed reaction is (S)-4-amino-5-oxopentanoate + tRNA(Glu) + NADP(+) = L-glutamyl-tRNA(Glu) + NADPH + H(+). It participates in porphyrin-containing compound metabolism; protoporphyrin-IX biosynthesis; 5-aminolevulinate from L-glutamyl-tRNA(Glu): step 1/2. Its function is as follows. Catalyzes the NADPH-dependent reduction of glutamyl-tRNA(Glu) to glutamate 1-semialdehyde (GSA). The polypeptide is Glutamyl-tRNA reductase (Nitratiruptor sp. (strain SB155-2)).